A 3432-amino-acid chain; its full sequence is Genome polyprotein (3432 aa).

The interval 2–15 (TKKPGGPGKNRAIN) is interaction with host EXOC1. Residues 2–109 (TKKPGGPGKN…RKQNKRGGNE (108 aa)) lie on the Cytoplasmic side of the membrane. The hydrophobic; homodimerization of capsid protein C stretch occupies residues 37–72 (LLDGRGPVRFVLALITFFKFTALAPTKALLGRWKAV). Residues 106–127 (GGNEGSIMWLASLAVVIACAGA) constitute a propeptide, ER anchor for the capsid protein C, removed in mature form by serine protease NS3. A helical membrane pass occupies residues 110 to 130 (GSIMWLASLAVVIACAGAMKL). The Extracellular segment spans residues 131-253 (SNFQGKLLMT…ATRYLMKTEN (123 aa)). The N-linked (GlcNAc...) asparagine; by host glycan is linked to asparagine 142. The chain crosses the membrane as a helical span at residues 254–274 (WIIRNPGYAFLAAVLGWMLGS). The Cytoplasmic segment spans residues 275 to 279 (NNGQR). Residues 280–294 (VVFTILLLLVAPAYS) form a helical membrane-spanning segment. Residues 295-746 (FNCLGMGNRD…QVFGGAFRTL (452 aa)) lie on the Extracellular side of the membrane. 6 cysteine pairs are disulfide-bonded: cysteine 297-cysteine 324, cysteine 354-cysteine 410, cysteine 354-cysteine 415, cysteine 368-cysteine 399, cysteine 386-cysteine 410, and cysteine 386-cysteine 415. A fusion peptide region spans residues 392 to 405 (DRGWGNGCGLFGKG). N-linked (GlcNAc...) asparagine; by host glycosylation occurs at asparagine 448. Cystine bridges form between cysteine 484–cysteine 581 and cysteine 598–cysteine 629. Residues 747–767 (FGGMSWITQGLMGALLLWMGV) form a helical membrane-spanning segment. The Cytoplasmic portion of the chain corresponds to 768-773 (NARDRS). Residues 774 to 794 (IALAFLATGGVLVFLATNVHA) traverse the membrane as a helical segment. Residues 795–1219 (DTGCAIDITR…AFAEANSGGD (425 aa)) are Extracellular-facing. 6 disulfide bridges follow: cysteine 798-cysteine 809, cysteine 849-cysteine 937, cysteine 973-cysteine 1017, cysteine 1074-cysteine 1123, cysteine 1085-cysteine 1106, and cysteine 1107-cysteine 1110. 2 N-linked (GlcNAc...) asparagine; by host glycosylation sites follow: asparagine 924 and asparagine 1001. A helical membrane pass occupies residues 1220 to 1240 (VLHLALIAVFKIQPAFLVMNM). Over 1241–1250 (LSTRWTNQEN) the chain is Cytoplasmic. Residues 1251–1271 (VVLVLGAAFFQLASVDLQIGV) form a helical membrane-spanning segment. Residue histidine 1272 is a topological domain, lumenal. A helical membrane pass occupies residues 1273–1293 (GILNAAAIAWMIVRAITFPTT). Residues 1294–1309 (SSVTMPVLALLTPGMR) lie on the Cytoplasmic side of the membrane. A helical transmembrane segment spans residues 1310-1330 (ALYLDTYRIILLVIGICSLLH). Over 1331–1341 (ERKKTMAKKKG) the chain is Lumenal. Residues 1342-1362 (AVLLGLALTSTGWFSPTTIAA) form a helical membrane-spanning segment. The Cytoplasmic portion of the chain corresponds to 1363–1374 (GLMVCNPNKKRG). The chain crosses the membrane as a helical span at residues 1375–1395 (WPATEFLSAVGLMFAIVGGLA). At 1396–1398 (ELD) the chain is on the lumenal side. A helical membrane pass occupies residues 1399-1419 (IESMSIPFMLAGLMAVSYVVS). Residues 1420 to 1476 (GKATDMWLERAADISWEMDAAITGSSRRLDVKLDDDGDFHLIDDPGVPWKVWVLRMS) are Cytoplasmic-facing. Residues 1427 to 1466 (LERAADISWEMDAAITGSSRRLDVKLDDDGDFHLIDDPGV) are interacts with and activates NS3 protease. The segment at residues 1477–1497 (CIGLAALTPWAIVPAAFGYWL) is an intramembrane region (helical). The Cytoplasmic segment spans residues 1498–2173 (TLKTTKRGGV…RMALEELPDA (676 aa)). One can recognise a Peptidase S7 domain in the interval 1505–1682 (GGVFWDTPSP…DRQEEPVPEA (178 aa)). Residues histidine 1555, aspartate 1579, and serine 1639 each act as charge relay system; for serine protease NS3 activity in the active site. The region spanning 1685 to 1841 (PNMLRKRQMT…DSNAPIHDLQ (157 aa)) is the Helicase ATP-binding domain. The interval 1689–1692 (RKRQ) is important for RNA-binding. Residue 1698–1705 (LHPGSGKT) coordinates ATP. The DEAH box motif lies at 1789–1792 (DEAH). Residues 1852–2017 (GYEWITEYAG…GLVAQLYGPE (166 aa)) enclose the Helicase C-terminal domain. N6-acetyllysine; by host is present on lysine 1893. Positions 1950-1972 (NPSPITSASAAQRRGRVGRNPNQ) are disordered. Residues 2168–2172 (EELPD) form a regulates the ATPase activity of NS3 helicase region. The chain crosses the membrane as a helical span at residues 2174 to 2194 (LETITLIVAITVMTGGFFLLM). The Lumenal segment spans residues 2195–2199 (MQRKG). Positions 2200-2220 (IGKMGLGALVLTLATFFLWAA) form an intramembrane region, helical. Position 2221 (glutamate 2221) is a topological domain, lumenal. Residues 2222–2242 (VPGTKIAGTLLIALLLMVVLI) form a helical membrane-spanning segment. The Cytoplasmic portion of the chain corresponds to 2243-2257 (PEPEKQRSQTDNQLA). The helical transmembrane segment at 2258–2278 (VFLICVLTVVGVVAANEYGML) threads the bilayer. Topologically, residues 2279–2311 (EKTKADLKSMFGGKTQASGLTGLPSMALDLRPA) are lumenal. Residues 2312–2332 (TAWALYGGSTVVLTPLLKHLI) constitute an intramembrane region (helical). Residues 2333–2368 (TSEYVTTSLASINSQAGSLFVLPRGVPFTDLDLTVG) lie on the Lumenal side of the membrane. Residues 2369–2389 (LVFLGCWGQITLTTFLTAMVL) traverse the membrane as a helical segment. Residues 2390–2444 (ATLHYGYMLPGWQAEALRAAQRRTAAGIMKNAVVDGMVATDVPELERTTPLMQKK) lie on the Cytoplasmic side of the membrane. A helical membrane pass occupies residues 2445–2465 (VGQVLLIGVSVAAFLVNPNVT). Residues 2466 to 2469 (TVRE) are Lumenal-facing. A helical membrane pass occupies residues 2470-2490 (AGVLVTAATLTLWDNGASAVW). The Cytoplasmic portion of the chain corresponds to 2491 to 3432 (NSTTATGLCH…DVLIQEDRVI (942 aa)). The region spanning 2528–2793 (GRPGGRTLGE…DVNLGSGTRA (266 aa)) is the mRNA cap 0-1 NS5-type MT domain. An S-adenosyl-L-methionine-binding site is contributed by serine 2583. The residue at position 2583 (serine 2583) is a Phosphoserine. The active-site For 2'-O-MTase activity is lysine 2588. S-adenosyl-L-methionine contacts are provided by glycine 2613, tryptophan 2614, threonine 2631, lysine 2632, aspartate 2658, and valine 2659. Aspartate 2673 serves as the catalytic For 2'-O-MTase activity. S-adenosyl-L-methionine is bound at residue isoleucine 2674. Catalysis depends on for 2'-O-MTase activity residues lysine 2709 and glutamate 2745. Position 2747 (tyrosine 2747) interacts with S-adenosyl-L-methionine. Glutamate 2967, histidine 2971, cysteine 2976, and cysteine 2979 together coordinate Zn(2+). The RdRp catalytic domain maps to 3057-3209 (GKMYADDTAG…KPLDDRFATA (153 aa)). The Zn(2+) site is built by histidine 3244, cysteine 3260, and cysteine 3379.

The protein in the N-terminal section; belongs to the class I-like SAM-binding methyltransferase superfamily. mRNA cap 0-1 NS5-type methyltransferase family. Homodimer. Interacts (via N-terminus) with host EXOC1 (via C-terminus); this interaction results in EXOC1 degradation through the proteasome degradation pathway. As to quaternary structure, forms heterodimers with envelope protein E in the endoplasmic reticulum and Golgi. In terms of assembly, homodimer; in the endoplasmic reticulum and Golgi. Interacts with protein prM. Interacts with non-structural protein 1. Interacts with host HSPA5. Homodimer; Homohexamer when secreted. Interacts with envelope protein E. NS1 interacts with NS4B. Interacts with host complement protein CFH; this interaction leads to the degradation of C3. As to quaternary structure, interacts (via N-terminus) with serine protease NS3. In terms of assembly, forms a heterodimer with serine protease NS3. May form homooligomers. Forms a heterodimer with NS2B. Interacts with non-structural protein 2A (via N-terminus). Interacts with NS4B. Interacts with unphosphorylated RNA-directed RNA polymerase NS5; this interaction stimulates RNA-directed RNA polymerase NS5 guanylyltransferase activity. Interacts with host ILF2. As to quaternary structure, interacts with serine protease NS3. In terms of assembly, homodimer. Interacts with host STAT2; this interaction inhibits the phosphorylation of the latter, and, when all viral proteins are present (polyprotein), targets STAT2 for degradation. Interacts with serine protease NS3. The cofactor is Mn(2+). Mg(2+) is required as a cofactor. Specific enzymatic cleavages in vivo yield mature proteins. Cleavages in the lumen of endoplasmic reticulum are performed by host signal peptidase, whereas cleavages in the cytoplasmic side are performed by serine protease NS3. Signal cleavage at the 2K-4B site requires a prior NS3 protease-mediated cleavage at the 4A-2K site. In terms of processing, cleaved in post-Golgi vesicles by a host furin, releasing the mature small envelope protein M, and peptide pr. This cleavage is incomplete as up to 30% of viral particles still carry uncleaved prM. Post-translationally, N-glycosylated. N-glycosylated. The excreted form is glycosylated and this is required for efficient secretion of the protein from infected cells. In terms of processing, acetylated by host KAT5. Acetylation modulates NS3 RNA-binding and unwinding activities and plays an important positive role for viral replication. Post-translationally, phosphorylated on serines residues. This phosphorylation may trigger NS5 nuclear localization.

It localises to the virion. Its subcellular location is the host nucleus. The protein localises to the host cytoplasm. It is found in the host perinuclear region. The protein resides in the secreted. It localises to the virion membrane. Its subcellular location is the host endoplasmic reticulum membrane. The protein localises to the host cell surface. It catalyses the reaction Selective hydrolysis of -Xaa-Xaa-|-Yaa- bonds in which each of the Xaa can be either Arg or Lys and Yaa can be either Ser or Ala.. The enzyme catalyses RNA(n) + a ribonucleoside 5'-triphosphate = RNA(n+1) + diphosphate. The catalysed reaction is a ribonucleoside 5'-triphosphate + H2O = a ribonucleoside 5'-diphosphate + phosphate + H(+). It carries out the reaction ATP + H2O = ADP + phosphate + H(+). It catalyses the reaction a 5'-end (5'-triphosphoguanosine)-ribonucleoside in mRNA + S-adenosyl-L-methionine = a 5'-end (N(7)-methyl 5'-triphosphoguanosine)-ribonucleoside in mRNA + S-adenosyl-L-homocysteine. The enzyme catalyses a 5'-end (N(7)-methyl 5'-triphosphoguanosine)-ribonucleoside in mRNA + S-adenosyl-L-methionine = a 5'-end (N(7)-methyl 5'-triphosphoguanosine)-(2'-O-methyl-ribonucleoside) in mRNA + S-adenosyl-L-homocysteine + H(+). Plays a role in virus budding by binding to the cell membrane and gathering the viral RNA into a nucleocapsid that forms the core of a mature virus particle. During virus entry, may induce genome penetration into the host cytoplasm after hemifusion induced by the surface proteins. Can migrate to the cell nucleus where it modulates host functions. Overcomes the anti-viral effects of host EXOC1 by sequestering and degrading the latter through the proteasome degradation pathway. Functionally, inhibits RNA silencing by interfering with host Dicer. In terms of biological role, prevents premature fusion activity of envelope proteins in trans-Golgi by binding to envelope protein E at pH6.0. After virion release in extracellular space, gets dissociated from E dimers. Its function is as follows. Acts as a chaperone for envelope protein E during intracellular virion assembly by masking and inactivating envelope protein E fusion peptide. prM is the only viral peptide matured by host furin in the trans-Golgi network probably to avoid catastrophic activation of the viral fusion activity in acidic Golgi compartment prior to virion release. prM-E cleavage is inefficient, and many virions are only partially matured. These uncleaved prM would play a role in immune evasion. May play a role in virus budding. Exerts cytotoxic effects by activating a mitochondrial apoptotic pathway through M ectodomain. May display a viroporin activity. Functionally, binds to host cell surface receptor and mediates fusion between viral and cellular membranes. Efficient virus attachment to cell is, at least in part, mediated by host HSPA5. Envelope protein is synthesized in the endoplasmic reticulum in the form of heterodimer with protein prM. They play a role in virion budding in the ER, and the newly formed immature particle is covered with 60 spikes composed of heterodimer between precursor prM and envelope protein E. The virion is transported to the Golgi apparatus where the low pH causes dissociation of PrM-E heterodimers and formation of E homodimers. prM-E cleavage is inefficient, and many virions are only partially matured. These uncleaved prM would play a role in immune evasion. In terms of biological role, involved in immune evasion, pathogenesis and viral replication. Once cleaved off the polyprotein, is targeted to three destinations: the viral replication cycle, the plasma membrane and the extracellular compartment. Essential for viral replication. Required for formation of the replication complex and recruitment of other non-structural proteins to the ER-derived membrane structures. Excreted as a hexameric lipoparticle that plays a role against host immune response. Antagonizing the complement function. Binds to the host macrophages and dendritic cells. Inhibits signal transduction originating from Toll-like receptor 3 (TLR3). Its function is as follows. Component of the viral RNA replication complex that functions in virion assembly and antagonizes the host alpha/beta interferon antiviral response. Required cofactor for the serine protease function of NS3. May have membrane-destabilizing activity and form viroporins. Functionally, displays three enzymatic activities: serine protease, NTPase and RNA helicase. NS3 serine protease, in association with NS2B, performs its autocleavage and cleaves the polyprotein at dibasic sites in the cytoplasm: C-prM, NS2A-NS2B, NS2B-NS3, NS3-NS4A, NS4A-2K and NS4B-NS5. NS3 RNA helicase binds RNA and unwinds dsRNA in the 3' to 5' direction. In terms of biological role, regulates the ATPase activity of the NS3 helicase activity. NS4A allows NS3 helicase to conserve energy during unwinding. Its function is as follows. Functions as a signal peptide for NS4B and is required for the interferon antagonism activity of the latter. Induces the formation of ER-derived membrane vesicles where the viral replication takes place. Inhibits interferon (IFN)-induced host STAT1 phosphorylation and nuclear translocation, thereby preventing the establishment of cellular antiviral state by blocking the IFN-alpha/beta pathway. Inhibits STAT2 translocation in the nucleus after IFN-alpha treatment. Functionally, replicates the viral (+) and (-) RNA genome. Performs the capping of genomes in the cytoplasm. NS5 methylates viral RNA cap at guanine N-7 and ribose 2'-O positions. Besides its role in RNA genome replication, also prevents the establishment of cellular antiviral state by blocking the interferon-alpha/beta (IFN-alpha/beta) signaling pathway. Inhibits host TYK2 and STAT2 phosphorylation, thereby preventing activation of JAK-STAT signaling pathway. In Ardeidae (herons), this protein is Genome polyprotein.